Consider the following 432-residue polypeptide: Probable protein phosphatase 2C 75 (432 aa).

The PPM-type phosphatase domain maps to 44 to 356 (VACLFTRQGK…DDCAVVCLFL (313 aa)). Mn(2+)-binding residues include Asp-80, Gly-81, Asp-301, and Asp-347. The disordered stretch occupies residues 372 to 408 (SPRMPALSGITRPNSKRVTPDDVDDGSDSNVSGDERS).

It belongs to the PP2C family. The cofactor is Mg(2+). Mn(2+) serves as cofactor.

The enzyme catalyses O-phospho-L-seryl-[protein] + H2O = L-seryl-[protein] + phosphate. It catalyses the reaction O-phospho-L-threonyl-[protein] + H2O = L-threonyl-[protein] + phosphate. This chain is Probable protein phosphatase 2C 75, found in Oryza sativa subsp. japonica (Rice).